A 362-amino-acid chain; its full sequence is Protein RecA (362 aa).

77–84 (GPESSGKT) is a binding site for ATP.

It belongs to the RecA family.

The protein localises to the cytoplasm. Functionally, can catalyze the hydrolysis of ATP in the presence of single-stranded DNA, the ATP-dependent uptake of single-stranded DNA by duplex DNA, and the ATP-dependent hybridization of homologous single-stranded DNAs. It interacts with LexA causing its activation and leading to its autocatalytic cleavage. This chain is Protein RecA, found in Rhizobium leguminosarum bv. trifolii (strain WSM2304).